Reading from the N-terminus, the 396-residue chain is NADH-quinone oxidoreductase subunit D 1 (396 aa).

This sequence belongs to the complex I 49 kDa subunit family. NDH-1 is composed of 14 different subunits. Subunits NuoB, C, D, E, F, and G constitute the peripheral sector of the complex.

It localises to the cell inner membrane. It catalyses the reaction a quinone + NADH + 5 H(+)(in) = a quinol + NAD(+) + 4 H(+)(out). Its function is as follows. NDH-1 shuttles electrons from NADH, via FMN and iron-sulfur (Fe-S) centers, to quinones in the respiratory chain. The immediate electron acceptor for the enzyme in this species is believed to be ubiquinone. Couples the redox reaction to proton translocation (for every two electrons transferred, four hydrogen ions are translocated across the cytoplasmic membrane), and thus conserves the redox energy in a proton gradient. The chain is NADH-quinone oxidoreductase subunit D 1 from Rhizobium etli (strain ATCC 51251 / DSM 11541 / JCM 21823 / NBRC 15573 / CFN 42).